Reading from the N-terminus, the 457-residue chain is Alkylcitrate synthase phiJ (457 aa).

Catalysis depends on residues His328 and Asp384.

This sequence belongs to the citrate synthase family.

It carries out the reaction (2E,10E)-dode-2,10-dicenoyl-CoA + oxaloacetate + H2O = (4E,11E)-2-hydroxytrideca-4,11-dien-1,2,3-tricarboxylate + CoA + H(+). It participates in secondary metabolite biosynthesis. In terms of biological role, alkylcitrate synthase; part of the gene cluster that mediates the biosynthesis of the antihypercholesterolemic agents phomoidrides which are dimeric anhydrides. Within the pathway, the alkylcitrate synthase (ACS) phiJ and the alkylcitrate dehydratase (ACDH) phiI produce the decarboxylated monomeric anhydrides by coupling the C12-fatty acyl product from phiA with oxalacetic acid. The pathway begins with the highly reducing polyketide synthase phiA that catalyzes the formation of a C12-fatty acyl-ACP, starting from one acetate and 5 malonate units. The hydrolase phiM is involved in the release of the C12-fatty acyl chain from phiA. The alkylcitrate synthase (ACS) phiJ and the alkylcitrate dehydratase (ACDH) phiI then give rise to decarboxylated monomeric anhydrides by coupling the C12-fatty acyl chain with oxalacetic acid. The cyclase phiC is responsible for the dimerization of the monomeric anhydrides which leads to the production of prephomoidride that contains the characteristic bicyclo[4.3.1]deca-1,6-diene system of phomoidrides. Iterative oxidation catalyzed by the alpha-ketoglutarate-dependent dioxygenase phiK produced then phomoidride A. Finally, the methyltransferase phiE converts phomoidride A to phomoidride B via an acetalization reaction. The phosphatidylethanolamine-binding protein phiB and phiN are not essential for dimerization and their functions have still to be determined. The chain is Alkylcitrate synthase phiJ from Fungal sp. (strain ATCC 74256).